A 208-amino-acid chain; its full sequence is UPF0637 protein BcerKBAB4_3786 (208 aa).

The protein belongs to the UPF0637 family.

This chain is UPF0637 protein BcerKBAB4_3786, found in Bacillus mycoides (strain KBAB4) (Bacillus weihenstephanensis).